Here is a 530-residue protein sequence, read N- to C-terminus: Calcium uptake protein 3, mitochondrial (530 aa).

A mitochondrion-targeting transit peptide spans Met-1 to Phe-43. A disordered region spans residues Gly-92–Gly-115. The EF-hand 1 domain occupies Lys-232–Lys-267. Ca(2+)-binding residues include Asp-245, Asp-247, Asn-249, Met-251, Asp-253, and Glu-256. In terms of domain architecture, EF-hand 2; degenerate spans Val-401 to Leu-436. The region spanning Phe-470–Arg-505 is the EF-hand 3 domain. Ca(2+) contacts are provided by Asp-483, Asp-485, Asp-487, Gln-489, and Glu-494.

It belongs to the MICU1 family. MICU3 subfamily. As to quaternary structure, heterodimer; disulfide-linked; heterodimerizes with MICU1. Component of the uniplex complex, composed of MCU, EMRE/SMDT1, MICU1 and MICU3 in a 4:4:1:1 stoichiometry. As to expression, specifically expressed in the central nervous system and skeletal muscle.

The protein localises to the mitochondrion intermembrane space. It is found in the mitochondrion inner membrane. Its function is as follows. Tissue-specific calcium sensor of the mitochondrial calcium uniporter (MCU) channel, which specifically regulates MCU channel activity in the central nervous system and skeletal muscle. Senses calcium level via its EF-hand domains: compared to MICU1 and MICU2, MICU3 has a higher affinity for calcium. MICU1 and MICU3 form a disulfide-linked heterodimer that stimulates and inhibits MCU activity, depending on the concentration of calcium. At low calcium levels, MICU1 occludes the pore of the MCU channel, preventing mitochondrial calcium uptake. At higher calcium levels, calcium-binding to MICU1 and MICU3 induces a conformational change that weakens MCU-MICU1 interactions and moves the MICU1-MICU3 heterodimer away from the pore, allowing calcium permeation through the MCU channel. The high calcium affinity of MICU3 lowers the calcium threshold necessary for calcium permeation through the MCU channel. The MICU1-MICU3 heterodimer promotes flexibility of neurotransmission in neuronal cells by enhancing mitochondrial calcium uptake in presynapses. It is also required to increase mitochondrial calcium uptake in skeletal muscle cells, thereby increasing ATP production. The polypeptide is Calcium uptake protein 3, mitochondrial (Homo sapiens (Human)).